Here is a 207-residue protein sequence, read N- to C-terminus: N-(5'-phosphoribosyl)anthranilate isomerase (207 aa).

Belongs to the TrpF family.

The enzyme catalyses N-(5-phospho-beta-D-ribosyl)anthranilate = 1-(2-carboxyphenylamino)-1-deoxy-D-ribulose 5-phosphate. The protein operates within amino-acid biosynthesis; L-tryptophan biosynthesis; L-tryptophan from chorismate: step 3/5. The sequence is that of N-(5'-phosphoribosyl)anthranilate isomerase from Petrotoga mobilis (strain DSM 10674 / SJ95).